Here is a 399-residue protein sequence, read N- to C-terminus: Mitochondrial glycine transporter (399 aa).

Solcar repeat units lie at residues 35–137 (IPPY…LRSV), 164–251 (LSTT…CKTN), and 266–374 (GNWM…GRSW). 6 consecutive transmembrane segments (helical) span residues 41-66 (LAFG…TRLQ), 112-138 (GTAP…RSVA), 170-195 (LLTG…ARFE), 226-249 (GFTA…EACK), 270-296 (VVSA…KTRM), and 349-367 (GLGL…GWSI). A disordered region spans residues 379–399 (EASSSAQEAGTGTRLLDHKQV).

This sequence belongs to the mitochondrial carrier (TC 2.A.29) family. SLC25A38 subfamily.

It is found in the mitochondrion inner membrane. It carries out the reaction glycine(in) = glycine(out). Mitochondrial glycine transporter that imports glycine into the mitochondrial matrix. Plays an important role in providing glycine for the first enzymatic step in heme biosynthesis, the condensation of glycine with succinyl-CoA to produce 5-aminolevulinate (ALA) in the mitochondrial matrix. This is Mitochondrial glycine transporter from Mycosarcoma maydis (Corn smut fungus).